Reading from the N-terminus, the 101-residue chain is Small ribosomal subunit protein bS6 (101 aa).

The protein belongs to the bacterial ribosomal protein bS6 family.

Its function is as follows. Binds together with bS18 to 16S ribosomal RNA. In Pseudarthrobacter chlorophenolicus (strain ATCC 700700 / DSM 12829 / CIP 107037 / JCM 12360 / KCTC 9906 / NCIMB 13794 / A6) (Arthrobacter chlorophenolicus), this protein is Small ribosomal subunit protein bS6.